The sequence spans 984 residues: MQEHLVVTLDGKDYLVEPGTNLLEFIKSQDTFVPSICYNESMGPIQTCDTCTVEIDGKIERSCSTVIDRPMTVNTVNNDVKDAQKEALDRILEKHMLYCTVCDYNNGDCEIHNTMDAWGLQHQTYEYKEKPYEKDYGPFYRYDPNQCILCGRCVEACQDIEVNETIRIDWDREHPRVIWDNDVPINESSCVSCGQCATVCPCNAMMEVNMEGNAGYMTDTEPGSLAAMIDLTKKAEPGYGPLFAISDSEAEMRKERIKKTKTVCTYCGVGCSFEVWTKDREILKVQPSHDSPANKIATCVKGKFSWGHINSDQRLTKPLVRKNGEFHEVEWDEALNVIADNFTAIKEKHGPDALSFISSSKATNEESYLMQKLARQVIGTNNVDNCSRYCQAPATKGLFRTVGHGGDSGSIEDLEKAAMSVLIGTNTAEAHPVIASRMKRAQKLFGQKIHVFDIRKHEMAERADRFYQPKPGTDLAWLSAVTKYIIDHDLHDKAFIDEWVDDFDEYYKSLETFTMAFAEEATGIPESELIKFAEECAKAESVVICWAMGITQQDIGSDSSTAISNLLLVTGNYRRPGTGAYPLRGHNNVQGCSDMGSMPDKITGYQSIEADDIRAKFEKEYGVKLNPKAGKDNHEMVEGIHDGEVHSLYLYGEDTGIVDSNINFVQAAFEKLDFMVVQDEFLTFTATYADVVLPASPSLEKDGTFTNTERRIQRLYQALEPLGDSKPDWKIFQAIANRLGFDWNYKHPSEIMDEVARLTPLYAGVSYDRLEGFNSLQWPVQPDGTDEPILYLEGFNFDNGKAKLFPLSFDNYFKQDEIYDIHVNNGRLLEHFHEGNMTYQTPMIKYKVPRAFVEISPELAEDRGIHEGAEVKLISETGEAVLQVHVTDRVKGKEIYIPLNNDAMENGDLGAINLLTNSDVDQYTDTPSYKRTSCRLEVITKRGKSPLNPNNFRVNKKRQPQYSVQVQKKWERSDYVFPGNQVDK.

The 77-residue stretch at 3–79 (EHLVVTLDGK…PMTVNTVNND (77 aa)) folds into the 2Fe-2S ferredoxin-type domain. [2Fe-2S] cluster contacts are provided by Cys37, Cys48, Cys51, and Cys63. The 4Fe-4S His(Cys)3-ligated-type domain occupies 79–119 (DVKDAQKEALDRILEKHMLYCTVCDYNNGDCEIHNTMDAWG). [4Fe-4S] cluster is bound by residues His95, Cys99, Cys102, Cys109, Cys147, Cys150, Cys153, Cys157, Cys190, Cys193, Cys196, Cys200, Cys264, Cys267, Cys271, and Cys299. 4Fe-4S ferredoxin-type domains lie at 138–165 (PFYR…VNET) and 181–211 (NDVP…VNME). Residues 252 to 984 (MRKERIKKTK…YVFPGNQVDK (733 aa)) are formate dehydrogenase. The 4Fe-4S Mo/W bis-MGD-type domain occupies 257–313 (IKKTKTVCTYCGVGCSFEVWTKDREILKVQPSHDSPANKIATCVKGKFSWGHINSDQ).

It in the C-terminal section; belongs to the prokaryotic molybdopterin-containing oxidoreductase family. The cofactor is [2Fe-2S] cluster. Requires [4Fe-4S] cluster as cofactor. Mo-bis(molybdopterin guanine dinucleotide) serves as cofactor.

The enzyme catalyses formate + NAD(+) = CO2 + NADH. This is Putative formate dehydrogenase SAUSA300_2258 from Staphylococcus aureus (strain USA300).